Reading from the N-terminus, the 191-residue chain is UPF0669 protein C6orf120 (191 aa).

Residues 1–30 form the signal peptide; sequence MAAPRGRAAPWTTALLLLLASQVLSPGSCA. Asn-53 carries an N-linked (GlcNAc...) asparagine glycan.

It belongs to the UPF0669 family. In terms of tissue distribution, mainly expressed in hepatocytes and some weak expression in germinal center cells of lymph nodes.

The protein resides in the secreted. Functionally, may be involved in induction of apoptosis in CD4(+) T-cells, but not CD8(+) T-cells or hepatocytes. This is UPF0669 protein C6orf120 (C6orf120) from Homo sapiens (Human).